A 172-amino-acid chain; its full sequence is Large ribosomal subunit protein uL10 (172 aa).

It belongs to the universal ribosomal protein uL10 family. As to quaternary structure, part of the ribosomal stalk of the 50S ribosomal subunit. The N-terminus interacts with L11 and the large rRNA to form the base of the stalk. The C-terminus forms an elongated spine to which L12 dimers bind in a sequential fashion forming a multimeric L10(L12)X complex.

Functionally, forms part of the ribosomal stalk, playing a central role in the interaction of the ribosome with GTP-bound translation factors. This is Large ribosomal subunit protein uL10 from Prosthecochloris aestuarii (strain DSM 271 / SK 413).